The following is a 557-amino-acid chain: MNWLRNSLIAAILVITYVLFIRWNEFSERQQVPTIANQPAAVTTPAYEAVPSDDAVASSATEESDVPEVSVSAEPVAAPKAVYQPKLVTVKTDVLEVQIDTNGGDVLQVVLLKHLADKADDNQPFVLMTQNSAHTYVARSGLAGGNGPDGAKKGRAKYSVAKTNYSLNSDDQVVVDLTLDQENAQITKRFTFTKSSYLIDVEYIITNRADTPWAAKLYGQIIRDGSEPSYGYMGMRPYLGAAITTPEVNYEKVSFDDMDDGPFKVEQKGGWVSLIQHYFISAWIPPKDATNSYELSKSSKGNYVLRFISETTTVAPHSVGTVKAGFYAGPKNIRRLEEISPHLDLTIDYSFLWFIAKPLFFALDFIHGLVGNWGVAIILLTVLIKAVFFYPSAMSYRSMAKMRKLQPMMAELKERYGEDKQKMSGELMKLYKKEKVNPFGGCLPILLQMPVFISLYWMIMESVELRHQPFFLWIQDLSVKDPLFILPLLMGVTMYIQQKLNPTPPDPMQAKVMQMMPIGFTFLFMFFPAGLVLYWVVNNTLSISQQYVITRNIEKAG.

A helical membrane pass occupies residues 1-21; sequence MNWLRNSLIAAILVITYVLFI. The tract at residues 52 to 71 is disordered; it reads SDDAVASSATEESDVPEVSV. 5 helical membrane-spanning segments follow: residues 346-366, 369-389, 439-459, 470-490, and 517-537; these read TIDYSFLWFIAKPLFFALDFI, LVGNWGVAIILLTVLIKAVFF, FGGCLPILLQMPVFISLYWMI, FFLWIQDLSVKDPLFILPLLM, and PIGFTFLFMFFPAGLVLYWVV.

It belongs to the OXA1/ALB3/YidC family. Type 1 subfamily. In terms of assembly, interacts with the Sec translocase complex via SecD. Specifically interacts with transmembrane segments of nascent integral membrane proteins during membrane integration.

The protein resides in the cell inner membrane. In terms of biological role, required for the insertion and/or proper folding and/or complex formation of integral membrane proteins into the membrane. Involved in integration of membrane proteins that insert both dependently and independently of the Sec translocase complex, as well as at least some lipoproteins. Aids folding of multispanning membrane proteins. The chain is Membrane protein insertase YidC from Saccharophagus degradans (strain 2-40 / ATCC 43961 / DSM 17024).